We begin with the raw amino-acid sequence, 531 residues long: Histone-arginine methyltransferase CARMER (531 aa).

Residues 141–450 form the SAM-dependent MTase PRMT-type domain; it reads ASQYFQFYGY…QSYDVTIDLH (310 aa). Residues Gln-154, Arg-163, Gly-187, Glu-209, Glu-238, and Thr-266 each contribute to the S-adenosyl-L-methionine site. Position 501 is an asymmetric dimethylarginine; by autocatalysis (Arg-501).

The protein belongs to the class I-like SAM-binding methyltransferase superfamily. Protein arginine N-methyltransferase family. In terms of assembly, homodimer. Post-translationally, the dimethylated protein is the major form.

The protein resides in the cytoplasm. Its subcellular location is the nucleus. It catalyses the reaction L-arginyl-[protein] + 2 S-adenosyl-L-methionine = N(omega),N(omega)-dimethyl-L-arginyl-[protein] + 2 S-adenosyl-L-homocysteine + 2 H(+). Its function is as follows. Methylates (mono- and asymmetric dimethylation) the guanidino nitrogens of arginyl residues in proteins. May methylate histone H3 at 'Arg-17' and activate transcription via chromatin remodeling. The protein is Histone-arginine methyltransferase CARMER (Art4) of Drosophila ananassae (Fruit fly).